The following is a 445-amino-acid chain: UNC93-like protein MFSD11 (445 aa).

The chain crosses the membrane as a helical span at residues leucine 8–serine 28. Asparagine 40 carries an N-linked (GlcNAc...) asparagine glycan. Transmembrane regions (helical) follow at residues leucine 52–valine 72, glycine 74–isoleucine 94, threonine 98–alanine 118, and isoleucine 138–tryptophan 158. Asparagine 163 carries N-linked (GlcNAc...) asparagine glycosylation. The next 7 helical transmembrane spans lie at arginine 170–isoleucine 190, methionine 239–valine 259, leucine 277–glycine 297, proline 309–methionine 329, leucine 343–leucine 363, alanine 385–tyrosine 405, and leucine 415–glycine 435.

The protein belongs to the unc-93 family.

It localises to the membrane. The protein is UNC93-like protein MFSD11 (mfsd11) of Xenopus laevis (African clawed frog).